Here is a 732-residue protein sequence, read N- to C-terminus: MGFGSCSRHALFTPAAFSGSFTTMTTSCFKRVYTAQIHGGDALGKRLPSVSSFSGQLPRHGLHRQSLAFFSTSHRRQTSPPPSPRTTSQSPTVPSKASTTPPTSLNTSKPIATESQDKTDWSIIVKLAGNIWPKNNPNVKFRVIGALTLLVAGKVLNVQVPFFFKTIVDSLNVPITESTTVWVLAGASIAGYGAARILTTLFGELRNAVFASVAQNAIRKVARETFEHLLNMDMKFHLERQTGGLTRAIDRGTKGISFILSSIVFHVIPTALEISMVCGILSWKFGWDFAAVTAITMLLYTWFTIKTTAWRTTFRKQANAADNKGATVAVDSLINYEAVKSFNNEKYEVAQYDTTLKAYEKASVKIATSLAALNSGQNFIFSSALTMMMLLGAQGIVKGTMTVGDLVLVNQLVFQLSLPLNFLGTVYRELRQSLIDMDVMFNLQSLNSAIKDTPTAKPLHLKGGEIEFRNVAFAYHPERPIFRDLSFKIPAGQKVAIVGPSGCGKSTVFRLLFRFYDSNSGQILIDGQDIKTVTLDSLRRSIGVVPQDTPLFHADILHNIRYGNLEATDEQVYEAARKAHVEGTIQRLPEKYATKVGERGLMISGGEKQRLAVARVLLKDPPVLFFDEATSALDVYTETELMRNINSILTGQGKTSVFIAHRLRTISDADLIIVLQDGYVAEQGTHEQLLAMPGGVYHRLWQAQLTESTQPTDEEIERQREELEVVDEKKKQ.

The transit peptide at 1-55 (MGFGSCSRHALFTPAAFSGSFTTMTTSCFKRVYTAQIHGGDALGKRLPSVSSFSG) directs the protein to the mitochondrion. At 56 to 143 (QLPRHGLHRQ…KNNPNVKFRV (88 aa)) the chain is on the mitochondrial matrix side. The disordered stretch occupies residues 71 to 114 (STSHRRQTSPPPSPRTTSQSPTVPSKASTTPPTSLNTSKPIATE). The segment covering 85-95 (RTTSQSPTVPS) has biased composition (low complexity). Residues 96-114 (KASTTPPTSLNTSKPIATE) are compositionally biased toward polar residues. Residues 144–164 (IGALTLLVAGKVLNVQVPFFF) form a helical membrane-spanning segment. Residues 144 to 432 (IGALTLLVAG…LGTVYRELRQ (289 aa)) enclose the ABC transmembrane type-1 domain. At 165–181 (KTIVDSLNVPITESTTV) the chain is on the mitochondrial intermembrane side. A helical membrane pass occupies residues 182-202 (WVLAGASIAGYGAARILTTLF). The Mitochondrial matrix segment spans residues 203–262 (GELRNAVFASVAQNAIRKVARETFEHLLNMDMKFHLERQTGGLTRAIDRGTKGISFILSS). A helical transmembrane segment spans residues 263 to 283 (IVFHVIPTALEISMVCGILSW). Lysine 284 is a topological domain (mitochondrial intermembrane). A helical membrane pass occupies residues 285–305 (FGWDFAAVTAITMLLYTWFTI). Over 306 to 378 (KTTAWRTTFR…SLAALNSGQN (73 aa)) the chain is Mitochondrial matrix. Glutathione-binding positions include 311 to 315 (RTTFR) and 374 to 377 (NSGQ). A helical transmembrane segment spans residues 379-399 (FIFSSALTMMMLLGAQGIVKG). At 400–405 (TMTVGD) the chain is on the mitochondrial intermembrane side. A helical membrane pass occupies residues 406–426 (LVLVNQLVFQLSLPLNFLGTV). Residue glycine 424 coordinates glutathione. Over 427-732 (YRELRQSLID…LEVVDEKKKQ (306 aa)) the chain is Mitochondrial matrix. The region spanning 466 to 702 (IEFRNVAFAY…PGGVYHRLWQ (237 aa)) is the ABC transporter domain. ATP-binding positions include tyrosine 475 and 499 to 506 (GPSGCGKS). The segment at 708 to 732 (STQPTDEEIERQREELEVVDEKKKQ) is disordered. Residues 717 to 732 (ERQREELEVVDEKKKQ) show a composition bias toward basic and acidic residues.

The protein belongs to the ABC transporter superfamily. ABCB family. Heavy Metal importer (TC 3.A.1.210) subfamily. In terms of assembly, homodimer.

It localises to the mitochondrion inner membrane. Functionally, performs an essential function in the generation of cytoplasmic iron-sulfur proteins by mediating the ATP-dependent export of mitochondrial Fe/S cluster precursors synthesized by NFS1 and other mitochondrial proteins. Hydrolyzes ATP. Binds glutathione and may function by transporting a glutathione-conjugated iron-sulfur compound. Plays a role during copper stress, in a manner dependent on the copper metalloregulatory transcription factor CUF1. The polypeptide is Iron-sulfur clusters transporter ATM1, mitochondrial (Cryptococcus neoformans var. grubii serotype A (strain H99 / ATCC 208821 / CBS 10515 / FGSC 9487) (Filobasidiella neoformans var. grubii)).